The primary structure comprises 1682 residues: Collagen alpha-4(IV) chain (1682 aa).

Positions Met-1–Gly-32 are cleaved as a signal peptide. Residues Ser-31–Arg-56 form a 7S domain region. Residue Asn-43 is glycosylated (N-linked (GlcNAc...) asparagine). Disordered regions lie at residues Arg-56–Pro-255 and Pro-379–Gly-1453. The segment at Gly-57–Gly-1451 is triple-helical region. The Cell attachment site signature appears at Arg-86–Asp-88. Positions Pro-103–Pro-116 are enriched in low complexity. The N-linked (GlcNAc...) asparagine glycan is linked to Asn-134. Short sequence motifs (cell attachment site) lie at residues Arg-137 to Asp-139 and Arg-181 to Asp-183. The span at Met-396–Phe-410 shows a compositional bias: pro residues. The span at Pro-411–Lys-426 shows a compositional bias: low complexity. Pro residues predominate over residues Pro-487–Pro-500. Basic and acidic residues predominate over residues Asp-578–Pro-601. 2 consecutive short sequence motifs (cell attachment site) follow at residues Arg-587–Asp-589 and Arg-593–Asp-595. The span at Leu-609–Pro-621 shows a compositional bias: pro residues. Residues Gln-632–Phe-647 show a composition bias toward low complexity. A glycan (N-linked (GlcNAc...) asparagine) is linked at Asn-661. Residues Pro-665–Phe-682 are compositionally biased toward low complexity. Residues Arg-716–Asp-718 carry the Cell attachment site motif. 2 stretches are compositionally biased toward low complexity: residues Pro-742–Asp-758 and Pro-857–Leu-902. Basic and acidic residues-rich tracts occupy residues Glu-911 to Glu-929 and Asp-938 to Leu-950. The segment covering Gly-969–Gly-978 has biased composition (gly residues). 2 consecutive short sequence motifs (cell attachment site) follow at residues Arg-980–Asp-982 and Arg-992–Asp-994. The span at Asp-998–Ile-1010 shows a compositional bias: low complexity. Positions Asp-1011–Ser-1025 are enriched in pro residues. A compositionally biased stretch (low complexity) spans Phe-1034 to Pro-1044. Positions Arg-1144–Asp-1146 match the Cell attachment site motif. 5 stretches are compositionally biased toward pro residues: residues Pro-1223–Ala-1235, Asp-1248–Ser-1272, Pro-1289–Gln-1304, Pro-1340–Pro-1351, and Ala-1435–Asp-1444. The Collagen IV NC1 domain maps to Gly-1457–Ser-1682. Intrachain disulfides connect Cys-1472-Cys-1561, Cys-1505-Cys-1558, Cys-1517-Cys-1523, Cys-1580-Cys-1678, Cys-1614-Cys-1675, and Cys-1626-Cys-1633.

The protein belongs to the type IV collagen family. In terms of assembly, there are six type IV collagen isoforms, alpha 1(IV)-alpha 6(IV), each of which can form a triple helix structure with 2 other chains to generate type IV collagen network. The alpha 3(IV) chain forms a triple helical protomer with alpha 4(IV) and alpha 5(IV); this triple helical structure dimerizes through NC1-NC1 domain interactions such that the alpha 3(IV), alpha 4(IV) and alpha 5(IV) chains of one protomer connect with the alpha 5(IV), alpha 4(IV) and alpha 3(IV) chains of the opposite protomer, respectively. Associates with LAMB2 at the neuromuscular junction and in GBM. Post-translationally, prolines at the third position of the tripeptide repeating unit (G-X-Y) are hydroxylated in some or all of the chains. Type IV collagens contain numerous cysteine residues which are involved in inter- and intramolecular disulfide bonding. 12 of these, located in the NC1 domain, are conserved in all known type IV collagens. In terms of processing, the trimeric structure of the NC1 domains is stabilized by covalent bonds between Lys and Met residues. In terms of tissue distribution, expressed in Bruch's membrane, outer plexiform layer, inner nuclear layer, inner plexiform layer, ganglion cell layer, inner limiting membrane and around the blood vessels of the retina (at protein level). Highly expressed in kidney and lung. Detected at lower levels in heart, muscle and skin.

The protein resides in the secreted. It localises to the extracellular space. Its subcellular location is the extracellular matrix. It is found in the basement membrane. Type IV collagen is the major structural component of glomerular basement membranes (GBM), forming a 'chicken-wire' meshwork together with laminins, proteoglycans and entactin/nidogen. In Mus musculus (Mouse), this protein is Collagen alpha-4(IV) chain.